Reading from the N-terminus, the 471-residue chain is MTDLPDNTRWQLWIVAFGFFMQSLDTTIVNTALPSMAQSLGESPLHMHMVIVSYVLTVAVMLPASGWLADKVGVRNIFFTAIVLFTLGSLFCALSGTLNELLLARALQGVGGAMMVPVGRLTVMKIVPREQYMAAMTFVTLPGQVGPLLGPALGGLLVEYASWHWIFLINIPVGIIGAIATLMLMPNYTMQTRRFDLSGFLLLAIGMAVLTLALDGSKGTGLSPLAITGLVAVGVVALVLYLLHARNNNRALFSLKLFRTRTFSLGLAGSFAGRIGSGMLPFMTPVFLQIGLGFSPFHAGLMMIPMVLGSMGMKRIVVQVVNRFGYRRVLVATTLGLSLVTLLFMTTALLGWYYVLPFVLFLQGMVNSTRFSSMNTLTLKDLPDNLASSGNSLLSMIMQLSMSIGVTIAGLLLGLFGSQHVSVDSGTTQTVFMYTWLSMAFIIALPAFIFARVPNDTHQNVAISRRKRSAQ.

Residues 1-11 (MTDLPDNTRWQ) are Periplasmic-facing. The helical transmembrane segment at 12 to 32 (LWIVAFGFFMQSLDTTIVNTA) threads the bilayer. Residues 33-48 (LPSMAQSLGESPLHMH) lie on the Cytoplasmic side of the membrane. Residues 49 to 69 (MVIVSYVLTVAVMLPASGWLA) traverse the membrane as a helical segment. The Periplasmic portion of the chain corresponds to 70–76 (DKVGVRN). Residues 77-97 (IFFTAIVLFTLGSLFCALSGT) form a helical membrane-spanning segment. Residues 98-101 (LNEL) are Cytoplasmic-facing. A helical membrane pass occupies residues 102–124 (LLARALQGVGGAMMVPVGRLTVM). The Periplasmic portion of the chain corresponds to 125–137 (KIVPREQYMAAMT). A helical membrane pass occupies residues 138–158 (FVTLPGQVGPLLGPALGGLLV). Residues 159 to 164 (EYASWH) lie on the Cytoplasmic side of the membrane. The chain crosses the membrane as a helical span at residues 165–185 (WIFLINIPVGIIGAIATLMLM). The Periplasmic portion of the chain corresponds to 186 to 196 (PNYTMQTRRFD). A helical membrane pass occupies residues 197–217 (LSGFLLLAIGMAVLTLALDGS). Topologically, residues 218 to 224 (KGTGLSP) are cytoplasmic. Residues 225 to 245 (LAITGLVAVGVVALVLYLLHA) traverse the membrane as a helical segment. At 246–262 (RNNNRALFSLKLFRTRT) the chain is on the periplasmic side. The chain crosses the membrane as a helical span at residues 263-283 (FSLGLAGSFAGRIGSGMLPFM). The Cytoplasmic segment spans residues 284 to 285 (TP). The helical transmembrane segment at 286–306 (VFLQIGLGFSPFHAGLMMIPM) threads the bilayer. Over 307–341 (VLGSMGMKRIVVQVVNRFGYRRVLVATTLGLSLVT) the chain is Periplasmic. A helical transmembrane segment spans residues 342–362 (LLFMTTALLGWYYVLPFVLFL). At 363–395 (QGMVNSTRFSSMNTLTLKDLPDNLASSGNSLLS) the chain is on the cytoplasmic side. Residues 396-416 (MIMQLSMSIGVTIAGLLLGLF) form a helical membrane-spanning segment. Residues 417–430 (GSQHVSVDSGTTQT) lie on the Periplasmic side of the membrane. The helical transmembrane segment at 431–451 (VFMYTWLSMAFIIALPAFIFA) threads the bilayer. The Cytoplasmic segment spans residues 452–471 (RVPNDTHQNVAISRRKRSAQ).

The protein belongs to the major facilitator superfamily. TCR/Tet family.

It is found in the cell inner membrane. The polypeptide is Putative multidrug resistance protein MdtD (Escherichia coli O17:K52:H18 (strain UMN026 / ExPEC)).